We begin with the raw amino-acid sequence, 217 residues long: Fucoxanthin-chlorophyll a-c binding protein A, chloroplastic (217 aa).

Residues 1–39 (MKSAVMAVACAAAPGLRRPSAFNGAALTTSAKSSSAMKM) constitute a chloroplast transit peptide. A run of 3 helical transmembrane segments spans residues 81–101 (IAML…PGML), 122–142 (IPPA…LAVM), and 183–203 (GRAA…NNKP).

Belongs to the fucoxanthin chlorophyll protein family. In terms of assembly, the LHC complex of chromophytic algae is composed of fucoxanthin, chlorophyll A and C bound non-covalently by fucoxanthin chlorophyll proteins (FCPs). The ratio of pigments in this LHC is; fucoxanthin: chlorophyll C: chlorophyll A; (0.6-1): (0.1-0.3): (1).

Its subcellular location is the plastid. It localises to the chloroplast thylakoid membrane. In terms of biological role, the light-harvesting complex (LHC) functions as a light receptor, it captures and delivers excitation energy to photosystems with which it is closely associated. Energy is transferred from the carotenoid and chlorophyll C (or B) to chlorophyll A and the photosynthetic reaction centers where it is used to synthesize ATP and reducing power. The protein is Fucoxanthin-chlorophyll a-c binding protein A, chloroplastic (FCPA) of Macrocystis pyrifera (Giant kelp).